We begin with the raw amino-acid sequence, 259 residues long: GTP cyclohydrolase FolE2 (259 aa).

Belongs to the GTP cyclohydrolase IV family.

It carries out the reaction GTP + H2O = 7,8-dihydroneopterin 3'-triphosphate + formate + H(+). It functions in the pathway cofactor biosynthesis; 7,8-dihydroneopterin triphosphate biosynthesis; 7,8-dihydroneopterin triphosphate from GTP: step 1/1. Functionally, converts GTP to 7,8-dihydroneopterin triphosphate. The sequence is that of GTP cyclohydrolase FolE2 from Halorhodospira halophila (strain DSM 244 / SL1) (Ectothiorhodospira halophila (strain DSM 244 / SL1)).